The following is a 285-amino-acid chain: Cell division protein DivIB (285 aa).

Residues 1–19 (MNEKNKNDESKHQEDKLQD) are compositionally biased toward basic and acidic residues. A disordered region spans residues 1–20 (MNEKNKNDESKHQEDKLQDQ). Residues 1-66 (MNEKNKNDES…NRFNAMERNS (66 aa)) lie on the Cytoplasmic side of the membrane. A helical transmembrane segment spans residues 67–87 (IHMIVILSIISLLLILLLSPL). In terms of domain architecture, POTRA spans 88-158 (MRFQKVEITG…QVAQIKIEEN (71 aa)). At 88 to 285 (MRFQKVEITG…FQVGTYFQQY (198 aa)) the chain is on the extracellular side.

It belongs to the FtsQ/DivIB family. DivIB subfamily.

It is found in the cell membrane. Its function is as follows. Cell division protein that may be involved in stabilizing or promoting the assembly of the division complex. The sequence is that of Cell division protein DivIB from Weissella koreensis (strain KACC 15510).